A 135-amino-acid chain; its full sequence is ATP synthase epsilon chain, chloroplastic (135 aa).

This sequence belongs to the ATPase epsilon chain family. As to quaternary structure, F-type ATPases have 2 components, CF(1) - the catalytic core - and CF(0) - the membrane proton channel. CF(1) has five subunits: alpha(3), beta(3), gamma(1), delta(1), epsilon(1). CF(0) has three main subunits: a, b and c.

Its subcellular location is the plastid. The protein localises to the chloroplast thylakoid membrane. Produces ATP from ADP in the presence of a proton gradient across the membrane. The chain is ATP synthase epsilon chain, chloroplastic from Stigeoclonium helveticum (Green alga).